The following is a 547-amino-acid chain: MFS-type transporter ltbE (547 aa).

A disordered region spans residues 1–23 (MEIAAETTGPAGVTTDVTNAEES). 13 helical membrane-spanning segments follow: residues 33-53 (QGWA…VLAI), 74-94 (DIGW…PTCG), 104-124 (WVYC…AVAP), 135-155 (ISGL…SYCV), 165-185 (PIVL…GGSI), 195-215 (FIFW…WFTL), 240-260 (ATLL…GGIV), 267-287 (KVFG…CLQW), 310-330 (GFMM…PIYF), 343-363 (INLL…GSLA), 370-390 (VPFM…YQLV), 399-419 (WIGF…MPIL), and 432-452 (TGLV…PSVG). N-linked (GlcNAc...) asparagine glycosylation occurs at asparagine 463. Residues 506–526 (VFWVGVATPALAWIASWAMEW) traverse the membrane as a helical segment.

Belongs to the major facilitator superfamily. TCR/Tet family.

It is found in the cell membrane. Its function is as follows. MFS-type transporter; part of the gene cluster that mediates the biosynthesis of luteodienoside A, a glycosylated polyketide consisting of an unusual 1-O-beta-D-glucopyranosyl-myo-inositol (glucinol) ester of 3-hydroxy-2,2,4-trimethylocta-4,6-dienoic acid. LtbE is probably involved in the secretion of luteodienoside A. The sequence is that of MFS-type transporter ltbE from Aspergillus luteorubrus.